A 176-amino-acid chain; its full sequence is Crossover junction endodeoxyribonuclease RuvC (176 aa).

Catalysis depends on residues D7, E68, and D141. Mg(2+) is bound by residues D7, E68, and D141.

This sequence belongs to the RuvC family. In terms of assembly, homodimer which binds Holliday junction (HJ) DNA. The HJ becomes 2-fold symmetrical on binding to RuvC with unstacked arms; it has a different conformation from HJ DNA in complex with RuvA. In the full resolvosome a probable DNA-RuvA(4)-RuvB(12)-RuvC(2) complex forms which resolves the HJ. Mg(2+) serves as cofactor.

It localises to the cytoplasm. It carries out the reaction Endonucleolytic cleavage at a junction such as a reciprocal single-stranded crossover between two homologous DNA duplexes (Holliday junction).. In terms of biological role, the RuvA-RuvB-RuvC complex processes Holliday junction (HJ) DNA during genetic recombination and DNA repair. Endonuclease that resolves HJ intermediates. Cleaves cruciform DNA by making single-stranded nicks across the HJ at symmetrical positions within the homologous arms, yielding a 5'-phosphate and a 3'-hydroxyl group; requires a central core of homology in the junction. The consensus cleavage sequence is 5'-(A/T)TT(C/G)-3'. Cleavage occurs on the 3'-side of the TT dinucleotide at the point of strand exchange. HJ branch migration catalyzed by RuvA-RuvB allows RuvC to scan DNA until it finds its consensus sequence, where it cleaves and resolves the cruciform DNA. This is Crossover junction endodeoxyribonuclease RuvC from Streptomyces avermitilis (strain ATCC 31267 / DSM 46492 / JCM 5070 / NBRC 14893 / NCIMB 12804 / NRRL 8165 / MA-4680).